The chain runs to 189 residues: Thymidine kinase (189 aa).

ATP-binding positions include 9 to 16 (GTMNSGKT) and 85 to 88 (DESQ). The active-site Proton acceptor is the Glu86. Residues Cys143, Cys146, Cys180, and His183 each contribute to the Zn(2+) site.

This sequence belongs to the thymidine kinase family. Homotetramer.

It localises to the cytoplasm. The catalysed reaction is thymidine + ATP = dTMP + ADP + H(+). In Streptococcus pyogenes serotype M3 (strain ATCC BAA-595 / MGAS315), this protein is Thymidine kinase.